The primary structure comprises 227 residues: Adapter protein MecA 1 (227 aa).

The protein belongs to the MecA family. In terms of assembly, homodimer.

Its function is as follows. Enables the recognition and targeting of unfolded and aggregated proteins to the ClpC protease or to other proteins involved in proteolysis. Acts negatively in the development of competence by binding ComK and recruiting it to the ClpCP protease. When overexpressed, inhibits sporulation. Also involved in Spx degradation by ClpC. This is Adapter protein MecA 1 (mecA1) from Bacillus anthracis.